Here is a 213-residue protein sequence, read N- to C-terminus: Maleylacetoacetate isomerase (213 aa).

The region spanning 3–84 (NETVLYDYWR…YLAETRDGTG (82 aa)) is the GST N-terminal domain. Residues 89–213 (HPIDRQRVRA…QRAHPDRAKP (125 aa)) form the GST C-terminal domain.

Belongs to the GST superfamily. Zeta family.

It catalyses the reaction 4-maleylacetoacetate = 4-fumarylacetoacetate. The protein operates within amino-acid degradation; L-phenylalanine degradation; acetoacetate and fumarate from L-phenylalanine: step 5/6. The chain is Maleylacetoacetate isomerase (maiA) from Rhizobium meliloti (strain 1021) (Ensifer meliloti).